Consider the following 451-residue polypeptide: UDP-N-acetylmuramoylalanine--D-glutamate ligase (451 aa).

119 to 125 (GSNGKTT) provides a ligand contact to ATP.

It belongs to the MurCDEF family.

Its subcellular location is the cytoplasm. The enzyme catalyses UDP-N-acetyl-alpha-D-muramoyl-L-alanine + D-glutamate + ATP = UDP-N-acetyl-alpha-D-muramoyl-L-alanyl-D-glutamate + ADP + phosphate + H(+). It participates in cell wall biogenesis; peptidoglycan biosynthesis. Cell wall formation. Catalyzes the addition of glutamate to the nucleotide precursor UDP-N-acetylmuramoyl-L-alanine (UMA). The chain is UDP-N-acetylmuramoylalanine--D-glutamate ligase from Streptococcus mutans serotype c (strain ATCC 700610 / UA159).